We begin with the raw amino-acid sequence, 432 residues long: Putative D-alanyl-D-alanine carboxypeptidase (432 aa).

A helical; Signal-anchor membrane pass occupies residues 7-25 (ATVLLTFSLSAFAVEYPVL).

This sequence belongs to the peptidase S12 family. YfeW subfamily.

The protein localises to the cell inner membrane. The enzyme catalyses Preferential cleavage: (Ac)2-L-Lys-D-Ala-|-D-Ala. Also transpeptidation of peptidyl-alanyl moieties that are N-acyl substituents of D-alanine.. The chain is Putative D-alanyl-D-alanine carboxypeptidase from Salmonella agona (strain SL483).